The following is a 404-amino-acid chain: Glucose-1-phosphate adenylyltransferase (404 aa).

Alpha-D-glucose 1-phosphate contacts are provided by residues Y99, G164, 179 to 180, and S197; that span reads EK.

It belongs to the bacterial/plant glucose-1-phosphate adenylyltransferase family.

The enzyme catalyses alpha-D-glucose 1-phosphate + ATP + H(+) = ADP-alpha-D-glucose + diphosphate. Its pathway is capsule biogenesis; capsule polysaccharide biosynthesis. It participates in glycan biosynthesis; glycogen biosynthesis. Involved in the biosynthesis of ADP-glucose, a building block, required in the biosynthesis of maltose-1-phosphate (M1P) and in the elongation reactions to produce linear alpha-1,4-glucans. Catalyzes the reaction between ATP and alpha-D-glucose 1-phosphate (G1P) to produce pyrophosphate and ADP-Glc. The chain is Glucose-1-phosphate adenylyltransferase from Mycobacterium bovis (strain ATCC BAA-935 / AF2122/97).